Consider the following 122-residue polypeptide: Large ribosomal subunit protein uL14 (122 aa).

This sequence belongs to the universal ribosomal protein uL14 family. Part of the 50S ribosomal subunit. Forms a cluster with proteins L3 and L19. In the 70S ribosome, L14 and L19 interact and together make contacts with the 16S rRNA in bridges B5 and B8.

In terms of biological role, binds to 23S rRNA. Forms part of two intersubunit bridges in the 70S ribosome. The polypeptide is Large ribosomal subunit protein uL14 (Solibacter usitatus (strain Ellin6076)).